Reading from the N-terminus, the 407-residue chain is tRNA pseudouridine synthase Pus10 (407 aa).

D232 functions as the Nucleophile in the catalytic mechanism. Residues Y300 and Y369 each contribute to the substrate site.

This sequence belongs to the pseudouridine synthase Pus10 family.

The catalysed reaction is uridine(54) in tRNA = pseudouridine(54) in tRNA. The enzyme catalyses uridine(55) in tRNA = pseudouridine(55) in tRNA. Functionally, responsible for synthesis of pseudouridine from uracil-54 and uracil-55 in the psi GC loop of transfer RNAs. The polypeptide is tRNA pseudouridine synthase Pus10 (Methanosphaera stadtmanae (strain ATCC 43021 / DSM 3091 / JCM 11832 / MCB-3)).